A 701-amino-acid polypeptide reads, in one-letter code: Low-density lipoprotein receptor-related protein 12 (701 aa).

The Extracellular portion of the chain corresponds to 1 to 334 (GKSEEPNCAC…ENCPVIVPTR (334 aa)). 2 consecutive LDL-receptor class A domains span residues 7 to 43 (NCAC…EICA) and 56 to 97 (PCAY…IDCD). 7 disulfides stabilise this stretch: Cys-8/Cys-20, Cys-15/Cys-33, Cys-27/Cys-42, Cys-57/Cys-74, Cys-64/Cys-87, Cys-81/Cys-96, and Cys-101/Cys-127. One can recognise a CUB domain in the interval 101-214 (CGQWLKYFYG…RGFNATYQVD (114 aa)). 2 N-linked (GlcNAc...) asparagine glycosylation sites follow: Asn-126 and Asn-208. 3 consecutive LDL-receptor class A domains span residues 216–253 (FCLP…INCT), 254–291 (MCQK…KNCF), and 292–328 (FCQP…ENCP). 9 cysteine pairs are disulfide-bonded: Cys-217–Cys-230, Cys-224–Cys-243, Cys-237–Cys-252, Cys-255–Cys-268, Cys-262–Cys-281, Cys-275–Cys-290, Cys-293–Cys-305, Cys-300–Cys-318, and Cys-312–Cys-327. N-linked (GlcNAc...) asparagine glycosylation occurs at Asn-251. Residue Asn-283 is glycosylated (N-linked (GlcNAc...) asparagine). A helical membrane pass occupies residues 335–355 (VITAAVIGSLICGLLLVIALG). The Cytoplasmic segment spans residues 356–701 (CTCKLYSLRM…TSDDEALLLC (346 aa)). Disordered regions lie at residues 465–520 (ADGD…LPQK), 535–565 (ASSS…SPAR), 590–612 (SSVS…REDD), and 643–665 (DQGQ…SNRD). Composition is skewed to polar residues over residues 590 to 599 (SSVSQNQSPL) and 643 to 656 (DQGQ…SATN).

The protein belongs to the LDLR family. May interact with RACK1, ZFYVE9 and NMRK2.

It is found in the membrane. It localises to the coated pit. In terms of biological role, probable receptor, which may be involved in the internalization of lipophilic molecules and/or signal transduction. May act as a tumor suppressor. The polypeptide is Low-density lipoprotein receptor-related protein 12 (LRP12) (Macaca fascicularis (Crab-eating macaque)).